The following is a 491-amino-acid chain: MVETHKKKIANLTQPIVSFYCFQVVSVLVAVVLLLSVSRGECRKGRILEALEYSAISCRAHSASLVDFGGVGDGQTLNTKAFQDAVSELSKYGSEGGAQLYVPAGKWLTGSFSLTSHFTLFLHRDAVLLASQDISQWPVIKPLPSYGRGRDAAAGRYTSLIFGTNLTDVIITGDNGTIDGQGGLWWQRFHGGKLKYTRPYLIELMYSADIQISNLTLLNSPSWNVHPVYSRNILIQGITILAPVRSPNTDGINPDSCTNTRIEDCYIVSGDDCVAVKSGWDEYGIAYGMPTKQLVIRRLTCISPYSAVIALGSEMSGGIQDVRAEDIVAINSESGIRIKTGIGRGGYVKDIYVRGMTMKTMKWAFWMTGNYGSHADNHYDPKAFPVIQGINYRDMVAENVSMAARLEGIPSDPFTGICISNVTIHLAAKAKKVPWTCTDVEGISSGVTPTPCSTLPDQGPEKTSLCNFPAESLPIDTVELQKCSYGINYYP.

Residues Pro-15 to Leu-35 traverse the membrane as a helical segment. N-linked (GlcNAc...) asparagine glycans are attached at residues Asn-165, Asn-175, and Asn-214. PbH1 repeat units lie at residues Ser-230–Ser-256, Cys-257–Ser-278, Ile-319–Thr-340, and Val-348–Gly-369. Asp-271 functions as the Proton donor in the catalytic mechanism. Asn-399 and Asn-421 each carry an N-linked (GlcNAc...) asparagine glycan.

Belongs to the glycosyl hydrolase 28 family.

It is found in the membrane. It carries out the reaction (1,4-alpha-D-galacturonosyl)n+m + H2O = (1,4-alpha-D-galacturonosyl)n + (1,4-alpha-D-galacturonosyl)m.. This Vitis vinifera (Grape) protein is Probable polygalacturonase.